The following is a 243-amino-acid chain: uncharacterized protein (243 aa).

It belongs to the mycobacterial PPE family.

The protein resides in the cell membrane. This is an uncharacterized protein from Mycobacterium tuberculosis (strain CDC 1551 / Oshkosh).